The sequence spans 427 residues: Trigger factor (427 aa).

The PPIase FKBP-type domain maps to 163–248 (GDTVVIDFVG…IHEVKTKEVP (86 aa)).

The protein belongs to the FKBP-type PPIase family. Tig subfamily.

It localises to the cytoplasm. It catalyses the reaction [protein]-peptidylproline (omega=180) = [protein]-peptidylproline (omega=0). In terms of biological role, involved in protein export. Acts as a chaperone by maintaining the newly synthesized protein in an open conformation. Functions as a peptidyl-prolyl cis-trans isomerase. In Streptococcus pyogenes serotype M18 (strain MGAS8232), this protein is Trigger factor.